Here is a 134-residue protein sequence, read N- to C-terminus: Nif-regulating protein A (134 aa).

The C4-type; atypical zinc finger occupies 3–36 (CLECGLVYIVSGLKVPEKISVRVFVNRIEHPFTH).

In terms of assembly, interacts with the general archaeal transcription factors TBPs.

Functionally, involved in nitrogen regulation. Enhances the transcription of the nitrogen fixation (nif) operon under nitrogen-limited conditions. Acts by binding to the nifH promoter region. This is Nif-regulating protein A from Methanosarcina mazei (strain ATCC BAA-159 / DSM 3647 / Goe1 / Go1 / JCM 11833 / OCM 88) (Methanosarcina frisia).